The sequence spans 188 residues: Elongation factor P (188 aa).

At K34 the chain carries N6-(3,6-diaminohexanoyl)-5-hydroxylysine.

This sequence belongs to the elongation factor P family. Post-translationally, may be beta-lysylated on the epsilon-amino group of Lys-34 by the combined action of EpmA and EpmB, and then hydroxylated on the C5 position of the same residue by EpmC (if this protein is present). Lysylation is critical for the stimulatory effect of EF-P on peptide-bond formation. The lysylation moiety may extend toward the peptidyltransferase center and stabilize the terminal 3-CCA end of the tRNA. Hydroxylation of the C5 position on Lys-34 may allow additional potential stabilizing hydrogen-bond interactions with the P-tRNA.

The protein resides in the cytoplasm. It functions in the pathway protein biosynthesis; polypeptide chain elongation. Functionally, involved in peptide bond synthesis. Alleviates ribosome stalling that occurs when 3 or more consecutive Pro residues or the sequence PPG is present in a protein, possibly by augmenting the peptidyl transferase activity of the ribosome. Modification of Lys-34 is required for alleviation. The protein is Elongation factor P of Serratia proteamaculans (strain 568).